Consider the following 923-residue polypeptide: Protocadherin gamma-B4 (923 aa).

Positions 1-30 (MGSGAGELGRAERLPVLFLFLLSLFCPALC) are cleaved as a signal peptide. 6 Cadherin domains span residues 31-133 (EQIR…TPKF), 134-242 (TQNS…APVF), 243-345 (SQDV…APEV), 346-450 (IFQS…APVF), 451-560 (SQSS…APRV), and 568-673 (DGSA…LPDI). Residues 31 to 689 (EQIRYRIPEE…SDLQAELQFY (659 aa)) are Extracellular-facing. 2 N-linked (GlcNAc...) asparagine glycosylation sites follow: asparagine 417 and asparagine 543. The helical transmembrane segment at 690-710 (LVVALALISVLFLVAMILAIA) threads the bilayer. Residues 711–923 (LRLRRSSSPA…KKKSGKKEKK (213 aa)) are Cytoplasmic-facing. Disordered stretches follow at residues 797 to 832 (SHQQ…WPNN) and 893 to 923 (ATLT…KEKK). A compositionally biased stretch (basic residues) spans 913 to 923 (NKKKSGKKEKK).

Its subcellular location is the cell membrane. In terms of biological role, potential calcium-dependent cell-adhesion protein. May be involved in the establishment and maintenance of specific neuronal connections in the brain. This chain is Protocadherin gamma-B4 (PCDHGB4), found in Homo sapiens (Human).